The sequence spans 542 residues: Chaperonin GroEL (542 aa).

Residues 29–32, 86–90, Gly413, 476–478, and Asp492 contribute to the ATP site; these read TMGP, DGTTT, and NAA. The interval 521-542 is disordered; that stretch reads KPDPNANNQAPAAPQGGMGGMM. Low complexity predominate over residues 524–535; it reads PNANNQAPAAPQ.

This sequence belongs to the chaperonin (HSP60) family. As to quaternary structure, forms a cylinder of 14 subunits composed of two heptameric rings stacked back-to-back. Interacts with the co-chaperonin GroES.

The protein localises to the cytoplasm. It catalyses the reaction ATP + H2O + a folded polypeptide = ADP + phosphate + an unfolded polypeptide.. Together with its co-chaperonin GroES, plays an essential role in assisting protein folding. The GroEL-GroES system forms a nano-cage that allows encapsulation of the non-native substrate proteins and provides a physical environment optimized to promote and accelerate protein folding. This chain is Chaperonin GroEL, found in Limosilactobacillus reuteri subsp. reuteri (strain JCM 1112) (Lactobacillus reuteri).